The following is a 557-amino-acid chain: Formate--tetrahydrofolate ligase 2 (557 aa).

An ATP-binding site is contributed by 66 to 73 (TPAGEGKT).

It belongs to the formate--tetrahydrofolate ligase family.

It catalyses the reaction (6S)-5,6,7,8-tetrahydrofolate + formate + ATP = (6R)-10-formyltetrahydrofolate + ADP + phosphate. The protein operates within one-carbon metabolism; tetrahydrofolate interconversion. The sequence is that of Formate--tetrahydrofolate ligase 2 from Streptococcus pyogenes serotype M1.